A 369-amino-acid chain; its full sequence is Phospho-N-acetylmuramoyl-pentapeptide-transferase (369 aa).

Transmembrane regions (helical) follow at residues 13–33, 49–69, 95–115, 119–139, 154–174, 183–203, 215–235, 237–257, 281–301, and 346–366; these read ISGI…ALTL, LPLL…VPLL, MGGI…SNFA, LAVS…DWQI, LALQ…NQPA, WVSF…FVLV, IDGL…AIVA, TSPA…GFLA, AVAL…IFFV, and VVSS…AIAS.

It belongs to the glycosyltransferase 4 family. MraY subfamily. Requires Mg(2+) as cofactor.

It localises to the cell inner membrane. The catalysed reaction is UDP-N-acetyl-alpha-D-muramoyl-L-alanyl-gamma-D-glutamyl-meso-2,6-diaminopimeloyl-D-alanyl-D-alanine + di-trans,octa-cis-undecaprenyl phosphate = di-trans,octa-cis-undecaprenyl diphospho-N-acetyl-alpha-D-muramoyl-L-alanyl-D-glutamyl-meso-2,6-diaminopimeloyl-D-alanyl-D-alanine + UMP. It participates in cell wall biogenesis; peptidoglycan biosynthesis. Catalyzes the initial step of the lipid cycle reactions in the biosynthesis of the cell wall peptidoglycan: transfers peptidoglycan precursor phospho-MurNAc-pentapeptide from UDP-MurNAc-pentapeptide onto the lipid carrier undecaprenyl phosphate, yielding undecaprenyl-pyrophosphoryl-MurNAc-pentapeptide, known as lipid I. The chain is Phospho-N-acetylmuramoyl-pentapeptide-transferase from Nostoc sp. (strain PCC 7120 / SAG 25.82 / UTEX 2576).